We begin with the raw amino-acid sequence, 200 residues long: MSFVTENPWLMVLTIFIINICYVTFLTMRTILTLKGYRYIAASVSFLEVLVYIVGLGLVMSNLDHIQNIIAYAFGFSIGIIVGMKIEEKLALGYTVVNVTSAEYELDLPNELRNLGYGVTHYAAFGRDGSRMVMQILTPRKYERKLMDTIKNLDPKAFIIAYEPRNIHGGFWTKGIRRRKLKDYEPEELESVVEHEIQSK.

The next 3 membrane-spanning stretches (helical) occupy residues Pro8–Met28, Ile40–Met60, and Ile66–Ile86.

It belongs to the UPF0316 family.

It localises to the cell membrane. The polypeptide is UPF0316 protein SAUSA300_1892 (Staphylococcus aureus (strain USA300)).